The following is a 180-amino-acid chain: Adipocyte-related X-chromosome expressed sequence 1 (180 aa).

The Cytoplasmic portion of the chain corresponds to 1–11 (MNSLLSRANSL). The chain crosses the membrane as a helical; Signal-anchor for type II membrane protein span at residues 12-32 (FAFTLSVMAALTLGCILTTAF). Over 33 to 180 (KDRSAPVRLH…PDSYEIATTF (148 aa)) the chain is Lumenal. N-linked (GlcNAc...) asparagine glycosylation occurs at asparagine 141.

Belongs to the SPCS3 family. As to expression, strongly expressed in epididymal white and brown adipose tissue with low levels in heart.

It localises to the endoplasmic reticulum membrane. Functionally, plays a role in adipogenesis. This is Adipocyte-related X-chromosome expressed sequence 1 from Mus musculus (Mouse).